We begin with the raw amino-acid sequence, 268 residues long: Tryptophan synthase alpha chain (268 aa).

Catalysis depends on proton acceptor residues E49 and D60.

Belongs to the TrpA family. Tetramer of two alpha and two beta chains.

The catalysed reaction is (1S,2R)-1-C-(indol-3-yl)glycerol 3-phosphate + L-serine = D-glyceraldehyde 3-phosphate + L-tryptophan + H2O. Its pathway is amino-acid biosynthesis; L-tryptophan biosynthesis; L-tryptophan from chorismate: step 5/5. Its function is as follows. The alpha subunit is responsible for the aldol cleavage of indoleglycerol phosphate to indole and glyceraldehyde 3-phosphate. The chain is Tryptophan synthase alpha chain from Xanthomonas oryzae pv. oryzae (strain MAFF 311018).